The following is a 1096-amino-acid chain: Phospholipase D zeta 1 (1096 aa).

Residue Ala2 is modified to N-acetylalanine. The region spanning 50–204 (PKAVIVSVSR…REVCRFLEVS (155 aa)) is the PX domain. Residues 131 to 152 (VQDEDADEVPLHQDESAKNRDV) form a disordered region. Basic and acidic residues predominate over residues 139 to 151 (VPLHQDESAKNRD). The region spanning 234–342 (DDSNRCCGCC…WVASINDAAL (109 aa)) is the PH domain. The PLD phosphodiesterase 1 domain occupies 477–504 (YLWSHHEKLVIVDNQVCFIGGLDLCFGR). Catalysis depends on residues His482, Lys484, and Asp489. The segment covering 607-632 (GRQEESDIESKKEEDSIRGIRRDDSF) has biased composition (basic and acidic residues). The interval 607-691 (GRQEESDIES…DGDTPMRGFV (85 aa)) is disordered. Residues 892–919 (SQVYVHSKIMIVDDRAALIGSANINDRS) enclose the PLD phosphodiesterase 2 domain. Catalysis depends on residues His897, Lys899, and Asp904.

The protein belongs to the phospholipase D family. PXPH-PLD subfamily. Does not require Ca(2+) or any other cation for activity. serves as cofactor. In terms of tissue distribution, expressed in inflorescences, flowers, siliques, stems, leaves, and roots. Highest expression in roots.

It localises to the cytoplasmic vesicle. It carries out the reaction a 1,2-diacyl-sn-glycero-3-phosphocholine + H2O = a 1,2-diacyl-sn-glycero-3-phosphate + choline + H(+). Calcium-independent and PIP2-dependent. In terms of biological role, hydrolyzes glycerol-phospholipids at the terminal phosphodiesteric bond to generate phosphatidic acids (PA). Phosphatidylcholine-selective. Regulates root-hair morphogenesis. Contributes to the supply of inorganic phosphorus for cell metabolism and diacylglycerol moieties for galactolipid synthesis in phosphorus-starved roots. Involved in root elongation during phosphate limitation. The polypeptide is Phospholipase D zeta 1 (Arabidopsis thaliana (Mouse-ear cress)).